A 374-amino-acid chain; its full sequence is Zinc finger CCCH domain-containing protein 15 homolog (374 aa).

Residues 1–20 (MPPKQQGPSKKSEQKRKEKV) form a disordered region. The segment covering 10–20 (KKSEQKRKEKV) has biased composition (basic and acidic residues). 2 C3H1-type zinc fingers span residues 90–117 (DPKS…HDLA) and 166–199 (VCKY…HCLP).

The protein belongs to the ZC3H15/TMA46 family.

The polypeptide is Zinc finger CCCH domain-containing protein 15 homolog (Caenorhabditis elegans).